We begin with the raw amino-acid sequence, 270 residues long: Elongation factor Ts (270 aa).

The involved in Mg(2+) ion dislocation from EF-Tu stretch occupies residues 77–80 (TDFV).

The protein belongs to the EF-Ts family.

Its subcellular location is the cytoplasm. In terms of biological role, associates with the EF-Tu.GDP complex and induces the exchange of GDP to GTP. It remains bound to the aminoacyl-tRNA.EF-Tu.GTP complex up to the GTP hydrolysis stage on the ribosome. The polypeptide is Elongation factor Ts (Nocardioides sp. (strain ATCC BAA-499 / JS614)).